We begin with the raw amino-acid sequence, 172 residues long: Disulfide bond formation protein B (172 aa).

The Cytoplasmic portion of the chain corresponds to 1-13 (MIIRLAGMSVRQG). The helical transmembrane segment at 14-30 (CLLGLLMCALMMGVALV) threads the bilayer. Residues 31–48 (LQYVYGLTPCPLCIGQRI) are Periplasmic-facing. A disulfide bridge connects residues C40 and C43. A helical membrane pass occupies residues 49–65 (AVLLAAFVFAIGALHNP). At 66-72 (AGNLGRG) the chain is on the cytoplasmic side. The chain crosses the membrane as a helical span at residues 73 to 90 (LYAGLAALASVLGLAVAA). The Periplasmic portion of the chain corresponds to 91–147 (RHVWLQSLPPENVPSCGPGLDYMMEVLPLWDVLSRVLAGSGECAEIHGSLLGMSIPQ). A disulfide bridge connects residues C106 and C133. The chain crosses the membrane as a helical span at residues 148–166 (WTLLGFAVLLLIPLGMLAG). Topologically, residues 167 to 172 (IVIRRR) are cytoplasmic.

Belongs to the DsbB family.

The protein localises to the cell inner membrane. In terms of biological role, required for disulfide bond formation in some periplasmic proteins. Acts by oxidizing the DsbA protein. The polypeptide is Disulfide bond formation protein B (Chromohalobacter salexigens (strain ATCC BAA-138 / DSM 3043 / CIP 106854 / NCIMB 13768 / 1H11)).